The chain runs to 150 residues: 3-hydroxyacyl-[acyl-carrier-protein] dehydratase FabZ (150 aa).

Residue histidine 51 is part of the active site.

The protein belongs to the thioester dehydratase family. FabZ subfamily.

Its subcellular location is the cytoplasm. The enzyme catalyses a (3R)-hydroxyacyl-[ACP] = a (2E)-enoyl-[ACP] + H2O. Involved in unsaturated fatty acids biosynthesis. Catalyzes the dehydration of short chain beta-hydroxyacyl-ACPs and long chain saturated and unsaturated beta-hydroxyacyl-ACPs. The polypeptide is 3-hydroxyacyl-[acyl-carrier-protein] dehydratase FabZ (Legionella pneumophila (strain Paris)).